The following is a 194-amino-acid chain: Putative manganese efflux pump MntP (194 aa).

The next 6 helical transmembrane spans lie at 2 to 22, 43 to 63, 67 to 87, 111 to 131, 137 to 157, and 174 to 194; these read ISII…AFAV, LWFG…ASTF, VTQF…GNMV, PLAV…AFMF, AFAI…GLHI, and GVVL…VIAF.

It belongs to the MntP (TC 9.B.29) family.

It localises to the cell membrane. Probably functions as a manganese efflux pump. The polypeptide is Putative manganese efflux pump MntP (Bifidobacterium longum (strain DJO10A)).